A 330-amino-acid chain; its full sequence is Anthranilate phosphoribosyltransferase (330 aa).

5-phospho-alpha-D-ribose 1-diphosphate is bound by residues Gly77, 80–81 (GD), Thr85, 87–90 (NIST), 105–113 (KHGNKAVSS), and Ser117. Gly77 contacts anthranilate. Ser89 lines the Mg(2+) pocket. Asn108 provides a ligand contact to anthranilate. Arg163 contributes to the anthranilate binding site. 2 residues coordinate Mg(2+): Asp222 and Glu223.

This sequence belongs to the anthranilate phosphoribosyltransferase family. As to quaternary structure, homodimer. Requires Mg(2+) as cofactor.

It carries out the reaction N-(5-phospho-beta-D-ribosyl)anthranilate + diphosphate = 5-phospho-alpha-D-ribose 1-diphosphate + anthranilate. It participates in amino-acid biosynthesis; L-tryptophan biosynthesis; L-tryptophan from chorismate: step 2/5. Its function is as follows. Catalyzes the transfer of the phosphoribosyl group of 5-phosphorylribose-1-pyrophosphate (PRPP) to anthranilate to yield N-(5'-phosphoribosyl)-anthranilate (PRA). In Pelagibacter ubique (strain HTCC1062), this protein is Anthranilate phosphoribosyltransferase.